Reading from the N-terminus, the 412-residue chain is Aspartokinase (412 aa).

ACT domains lie at Leu266–Asn340 and Ile346–Glu412.

Belongs to the aspartokinase family.

It carries out the reaction L-aspartate + ATP = 4-phospho-L-aspartate + ADP. It functions in the pathway amino-acid biosynthesis; L-lysine biosynthesis via DAP pathway; (S)-tetrahydrodipicolinate from L-aspartate: step 1/4. Its pathway is amino-acid biosynthesis; L-methionine biosynthesis via de novo pathway; L-homoserine from L-aspartate: step 1/3. It participates in amino-acid biosynthesis; L-threonine biosynthesis; L-threonine from L-aspartate: step 1/5. This is Aspartokinase (lysC) from Pseudomonas aeruginosa (strain ATCC 15692 / DSM 22644 / CIP 104116 / JCM 14847 / LMG 12228 / 1C / PRS 101 / PAO1).